We begin with the raw amino-acid sequence, 414 residues long: Gamma-glutamyl phosphate reductase (414 aa).

This sequence belongs to the gamma-glutamyl phosphate reductase family.

It is found in the cytoplasm. It carries out the reaction L-glutamate 5-semialdehyde + phosphate + NADP(+) = L-glutamyl 5-phosphate + NADPH + H(+). Its pathway is amino-acid biosynthesis; L-proline biosynthesis; L-glutamate 5-semialdehyde from L-glutamate: step 2/2. Functionally, catalyzes the NADPH-dependent reduction of L-glutamate 5-phosphate into L-glutamate 5-semialdehyde and phosphate. The product spontaneously undergoes cyclization to form 1-pyrroline-5-carboxylate. The protein is Gamma-glutamyl phosphate reductase of Xanthomonas axonopodis pv. citri (strain 306).